Reading from the N-terminus, the 131-residue chain is Small ribosomal subunit protein bS6 (131 aa).

Residues 96-131 (VTEASPMVKAKDERRERRDDFANETADDAEAGDSEE) are disordered. A compositionally biased stretch (basic and acidic residues) spans 104–116 (KAKDERRERRDDF). Acidic residues predominate over residues 120 to 131 (TADDAEAGDSEE).

The protein belongs to the bacterial ribosomal protein bS6 family.

In terms of biological role, binds together with bS18 to 16S ribosomal RNA. The chain is Small ribosomal subunit protein bS6 from Salmonella arizonae (strain ATCC BAA-731 / CDC346-86 / RSK2980).